The sequence spans 732 residues: Catalase-peroxidase (732 aa).

Residues M1 to N20 form a disordered region. A cross-link (tryptophyl-tyrosyl-methioninium (Trp-Tyr) (with M-246)) is located at residues W92–Y220. H93 acts as the Proton acceptor in catalysis. The segment at residues Y220–M246 is a cross-link (tryptophyl-tyrosyl-methioninium (Tyr-Met) (with W-92)). H261 provides a ligand contact to heme b.

It belongs to the peroxidase family. Peroxidase/catalase subfamily. In terms of assembly, homodimer or homotetramer. Heme b is required as a cofactor. Formation of the three residue Trp-Tyr-Met cross-link is important for the catalase, but not the peroxidase activity of the enzyme.

The enzyme catalyses H2O2 + AH2 = A + 2 H2O. It catalyses the reaction 2 H2O2 = O2 + 2 H2O. Bifunctional enzyme with both catalase and broad-spectrum peroxidase activity. In Desulfosudis oleivorans (strain DSM 6200 / JCM 39069 / Hxd3) (Desulfococcus oleovorans), this protein is Catalase-peroxidase.